Consider the following 507-residue polypeptide: F-box only protein 31 (507 aa).

Residues 19-42 (RQQRRGPAETAAADSEADTDPEEE) are disordered. The residue at position 33 (Ser-33) is a Phosphoserine. Acidic residues predominate over residues 33 to 42 (SEADTDPEEE). Phosphothreonine is present on Thr-37. The D box signature appears at 50-55 (RCSLLE). The 47-residue stretch at 50–96 (RCSLLELPPELLVEIFASLPGTDLPSLAQVCSRFRRILHTDTIWRRR) folds into the F-box domain. Residues Cys-192, His-200, Cys-216, and His-222 each coordinate Zn(2+). Position 264 is a phosphoserine; by ATM (Ser-264). A DDL motif motif is present at residues 283 to 285 (DDL). A disordered region spans residues 364 to 421 (RQEQEAGEGPAPHREPAVKDPEGPPAKASKEAGPGAEAAEQSSTSGQGQPFVLPAGVS). The span at 374–385 (APHREPAVKDPE) shows a compositional bias: basic and acidic residues. Phosphoserine is present on Ser-448.

Belongs to the FBXO31 family. In terms of assembly, part of a SCF (SKP1-cullin-F-box) protein ligase complex SCF(FBXO31) composed of CUL1, SKP1, RBX1 and FBXO31. Interacts (when phosphorylated at Ser-33) with CDC20, promoting ubiquitination by the APC/C complex. Phosphorylation at Ser-264 by ATM following gamma-irradiation results in its stabilization. Phosphorylation at Ser-448 in absence of stress promotes its ubiquitination and degradation by the SCF(FBXO46) complex. Phosphorylation at Ser-33 by AKT1 promotes association with CDC20 and ubiquitination by the APC/C complex. Post-translationally, ubiquitinated by the SCF(FBXO46) complex in absence of stress, promoting its degradation. Ubiquitinated by the APC/C complex following phosphorylation at Ser-33, leading to its degradation by the proteasome.

Its subcellular location is the cytoplasm. The protein localises to the cytoskeleton. It is found in the microtubule organizing center. It localises to the centrosome. The protein operates within protein modification; protein ubiquitination. In terms of biological role, substrate-recognition component of the SCF(FBXO31) protein ligase complex, which specifically mediates the ubiquitination of proteins amidated at their C-terminus in response to oxidative stress, leading to their degradation by the proteasome. FBXO31 specifically recognizes and binds C-terminal peptides bearing an amide: C-terminal amidation in response to oxidative stress takes place following protein fragmentation. The SCF(FBXO31) also plays a role in G1 arrest following DNA damage by mediating ubiquitination of phosphorylated cyclin-D1 (CCND1), promoting its degradation by the proteasome, resulting in G1 arrest. The SCF(FBXO31) complex is however not a major regulator of CCND1 stability during the G1/S transition. In response to genotoxic stress, the SCF(FBXO31) complex directs ubiquitination and degradation of phosphorylated MDM2, thereby promoting p53/TP53-mediated DNA damage response. SCF(FBXO31) complex is required for genomic integrity by catalyzing ubiquitination and degradation of cyclin-A (CCNA1 and/or CCNA2) during the G1 phase. In response to genotoxic stress, the SCF(FBXO31) complex directs ubiquitination and degradation of phosphorylated FBXO46 and MAP2K6. SCF(FBXO31) complex promotes ubiquitination and degradation of CDT1 during the G2 phase to prevent re-replication. The SCF(FBXO31) complex also mediates ubiquitination and degradation of DUSP6, OGT and PARD6A. The protein is F-box only protein 31 of Rattus norvegicus (Rat).